The primary structure comprises 1273 residues: MSETGKNSTAELSAVKVTVKLPESIVHHRSHQKKQQSHNVKETNELSFQFPRETRVQTILDVLSYAQATKYLTNFKLKTVHQILNPEQSINEIINDEKSNHLNLSIELCPYNTREIVRHVLTLRDFIGFALETEDGISEFSISTGSKFSNIPFMDVKEKQEEIEEIPRDDNKNLPKKNVLKVSQEEKDNFSKEVHSILDSFKYSNSNLKSAYSTISNIVTPCLNSLNLSAFNPVPAFFKTKGHILYLHIVTLEGESFHVTAVPSGFYINKSSSNKFDPSMKDVEGITQQDSIKYNLYDLIALHSKKFHSHVEALEKKLAAYQSIEYVKPLTTFLHKPWLVSSLPANNADYSRMQLDSSQYESERNFNDEFQAIRELPTPTVQESIQSERLLSRISHEFTTAAVKGAMSIFYGEMLPLNPESDDQIFLRDNIFYSYVMDANGSYDGKGGNDAAFAASNQDLKTIQILKNLKMKDVYYLLTTIIDFGGKRILAQTPVPGLLSNMGADVITDADSGEQMIVDKKSEVSVVYGLDEESGKVLANDQFDKSVSEEFSKYLHLKSHDVEGSKISFSYQSKGILGSDKRNYIIDLANTYPLDVKFAKEHFDNAEESKRYPHRQTLLRPELVEKWWNSKVQAEGIEINKAYDEAKFTYNPDAYQVEGVEDVNIQDMSSYLVETVLPSVIEDYATGNVSVPYDGEHLVDTLHINGINVRYLGKLAILAKEKLQLQEEVHEKRLKEIEISNKDYEEWEASYLKKIEKMIIERQEKVNKLVQEGKEVPKELTEELKLNEDDIRKPTDDAPAVVNTDELLPLIKVTEIEIFARTMKHILRKYTKDLPVVAIPSMIAFVLNLLFGQKYNEVPKPESVDSFYDVDTYEFSKLTRDGLIKEIQLVSELRFRYELAADFVDQFSDAPFILIRSIARKSGIQFLNKDYFFTKDQFEEFKLSQDKKVRGKLVAPANTFTVSDLNMIPRIKDIDYSSVLSDQKWAEGSMLLNEDQNAALTLFAQAIAIKEEVNGVLHKDVAEKYLTLSTVYSKLGLTPEAVAFCRKSCAIYERVSGIDSFEMLRSLSNLALLEFANESPYNSALVFKRIVETLESLKITEKIHHPAALNAFNQLEQMSLGVENTKLTVELCKQFRSLIVSLDGNDTLAYATLESRIGNLYASINDFHNAMEHISKTPRIFTRELGTNHQITAQSRQWVNGLSNLMKDAQQKKKLAAEQASVNSGSRKKNVNQKADAPKAELAEKSVDELLDFIEGGSTEKSKKKSSKKKGKK.

In terms of domain architecture, Clu spans 344–599 (PANNADYSRM…NTYPLDVKFA (256 aa)). TPR repeat units follow at residues 981 to 1013 (SDQKWAEGSMLLNEDQNAALTLFAQAIAIKEEV), 1022 to 1055 (AEKYLTLSTVYSKLGLTPEAVAFCRKSCAIYERV), and 1151 to 1184 (ATLESRIGNLYASINDFHNAMEHISKTPRIFTRE). 2 disordered regions span residues 1217–1242 (AEQASVNSGSRKKNVNQKADAPKAEL) and 1254–1273 (IEGGSTEKSKKKSSKKKGKK). Over residues 1262–1273 (SKKKSSKKKGKK) the composition is skewed to basic residues.

This sequence belongs to the CLU family. May associate with the eukaryotic translation initiation factor 3 (eIF-3) complex.

Its subcellular location is the cytoplasm. Its function is as follows. mRNA-binding protein involved in proper cytoplasmic distribution of mitochondria. In Vanderwaltozyma polyspora (strain ATCC 22028 / DSM 70294 / BCRC 21397 / CBS 2163 / NBRC 10782 / NRRL Y-8283 / UCD 57-17) (Kluyveromyces polysporus), this protein is Clustered mitochondria protein homolog.